The following is a 180-amino-acid chain: HTH-type transcriptional regulator EcpR (180 aa).

Residues 122–180 (KDIKKDKITDREMKIIRMTAQGMQPKSIARIENCSVKTVYTHRRNAEAKLYSKIYKLVQ) form the HTH luxR-type domain. Positions 146–165 (PKSIARIENCSVKTVYTHRR) form a DNA-binding region, H-T-H motif.

This sequence belongs to the EcpR/MatA family.

The protein localises to the cytoplasm. Part of the ecpRABCDE operon, which encodes the E.coli common pilus (ECP). ECP plays a dual role in early-stage biofilm development and host cell recognition. Positively regulates the expression of the ecp operon. The sequence is that of HTH-type transcriptional regulator EcpR (ecpR) from Klebsiella pneumoniae (strain 342).